Consider the following 207-residue polypeptide: Sodium/potassium-transporting ATPase subunit beta-1-interacting protein 1 (207 aa).

3 helical membrane passes run 2–22 (GRCSGRCTLVGICCLQLAAAL), 35–55 (APILANFLHIMVVILGILGTL), and 62–82 (LILYSIWLALWVAWNAFIICF). A glycan (N-linked (GlcNAc...) asparagine) is linked at N100. A helical transmembrane segment spans residues 147 to 167 (ALSSALQIFLALFGFVYACYV).

It belongs to the NKAIN family. In terms of assembly, interacts with atp1b1 C-terminus.

The protein resides in the cell membrane. This is Sodium/potassium-transporting ATPase subunit beta-1-interacting protein 1 (nkain1) from Xenopus laevis (African clawed frog).